Reading from the N-terminus, the 34-residue chain is Brevinin-2Ec (34 aa).

Residues Cys28 and Cys34 are joined by a disulfide bond.

The protein belongs to the frog skin active peptide (FSAP) family. Brevinin subfamily. In terms of tissue distribution, expressed by the skin glands.

It localises to the secreted. Shows antibacterial activity against representative Gram-negative and Gram-positive bacterial species, and hemolytic activity. This Pelophylax lessonae (Pool frog) protein is Brevinin-2Ec.